The primary structure comprises 209 residues: uncharacterized protein (209 aa).

In terms of biological role, may influence the expression of the nuc gene. This is an uncharacterized protein from Shigella flexneri.